Consider the following 147-residue polypeptide: Large ribosomal subunit protein bL9 (147 aa).

The protein belongs to the bacterial ribosomal protein bL9 family.

Its function is as follows. Binds to the 23S rRNA. This Caldanaerobacter subterraneus subsp. tengcongensis (strain DSM 15242 / JCM 11007 / NBRC 100824 / MB4) (Thermoanaerobacter tengcongensis) protein is Large ribosomal subunit protein bL9.